We begin with the raw amino-acid sequence, 152 residues long: Large ribosomal subunit protein bL9 (152 aa).

Belongs to the bacterial ribosomal protein bL9 family.

In terms of biological role, binds to the 23S rRNA. This Streptococcus thermophilus (strain ATCC BAA-491 / LMD-9) protein is Large ribosomal subunit protein bL9.